A 267-amino-acid polypeptide reads, in one-letter code: Probable ribosomal RNA small subunit methyltransferase A (267 aa).

S-adenosyl-L-methionine-binding residues include Leu12, Gly37, Glu58, Asp83, and Asn100.

This sequence belongs to the class I-like SAM-binding methyltransferase superfamily. rRNA adenine N(6)-methyltransferase family. RsmA subfamily.

The protein localises to the cytoplasm. In terms of biological role, specifically dimethylates two adjacent adenosines in the loop of a conserved hairpin near the 3'-end of 16S rRNA in the 30S particle. May play a critical role in biogenesis of 30S subunits. This Methanococcus vannielii (strain ATCC 35089 / DSM 1224 / JCM 13029 / OCM 148 / SB) protein is Probable ribosomal RNA small subunit methyltransferase A.